The chain runs to 229 residues: Imidazoleglycerol-phosphate dehydratase (229 aa).

It belongs to the imidazoleglycerol-phosphate dehydratase family.

It carries out the reaction D-erythro-1-(imidazol-4-yl)glycerol 3-phosphate = 3-(imidazol-4-yl)-2-oxopropyl phosphate + H2O. It participates in amino-acid biosynthesis; L-histidine biosynthesis; L-histidine from 5-phospho-alpha-D-ribose 1-diphosphate: step 6/9. The chain is Imidazoleglycerol-phosphate dehydratase from Neurospora crassa (strain ATCC 24698 / 74-OR23-1A / CBS 708.71 / DSM 1257 / FGSC 987).